A 418-amino-acid chain; its full sequence is Actin-related protein 3 (418 aa).

An N-acetylalanine modification is found at Ala-2. Residues Lys-240, Lys-244, Lys-251, and Lys-254 each carry the N6-acetyllysine modification.

The protein belongs to the actin family. ARP3 subfamily. As to quaternary structure, component of the Arp2/3 complex composed of ACTR2/ARP2, ACTR3/ARP3, ARPC1B/p41-ARC, ARPC2/p34-ARC, ARPC3/p21-ARC, ARPC4/p20-ARC and ARPC5/p16-ARC. Interacts with WHDC1. Interacts weakly with MEFV. Interacts with AVIL. (Microbial infection) Interacts with bacterium B.thailandensis BimA.

The protein resides in the cytoplasm. It localises to the cytoskeleton. The protein localises to the cell projection. It is found in the nucleus. Its function is as follows. ATP-binding component of the Arp2/3 complex, a multiprotein complex that mediates actin polymerization upon stimulation by nucleation-promoting factor (NPF). The Arp2/3 complex mediates the formation of branched actin networks in the cytoplasm, providing the force for cell motility. Seems to contact the pointed end of the daughter actin filament. In podocytes, required for the formation of lamellipodia downstream of AVIL and PLCE1 regulation. In addition to its role in the cytoplasmic cytoskeleton, the Arp2/3 complex also promotes actin polymerization in the nucleus, thereby regulating gene transcription and repair of damaged DNA. The Arp2/3 complex promotes homologous recombination (HR) repair in response to DNA damage by promoting nuclear actin polymerization, leading to drive motility of double-strand breaks (DSBs). Plays a role in ciliogenesis. The polypeptide is Actin-related protein 3 (Actr3) (Mus musculus (Mouse)).